Here is a 242-residue protein sequence, read N- to C-terminus: NAD-dependent protein deacetylase (242 aa).

The 242-residue stretch at 1 to 242 (MQQFEEVHSI…EFVEGLSSRK (242 aa)) folds into the Deacetylase sirtuin-type domain. Residues Ala-23, Thr-27, Phe-34, Arg-35, Gln-102, Ile-104, Asp-105, and His-120 each coordinate NAD(+). Phe-34 is a nicotinamide binding site. Nicotinamide is bound by residues Ile-104 and Asp-105. His-120 (proton acceptor) is an active-site residue. Zn(2+)-binding residues include Cys-128, Cys-131, Cys-148, and Cys-151. NAD(+) contacts are provided by Thr-187, Ser-188, Asn-213, and Ile-231.

It belongs to the sirtuin family. Class U subfamily. Zn(2+) is required as a cofactor.

Its subcellular location is the cytoplasm. It catalyses the reaction N(6)-acetyl-L-lysyl-[protein] + NAD(+) + H2O = 2''-O-acetyl-ADP-D-ribose + nicotinamide + L-lysyl-[protein]. In terms of biological role, NAD-dependent protein deacetylase which modulates the activities of several enzymes which are inactive in their acetylated form. The chain is NAD-dependent protein deacetylase from Bacillus cereus (strain ATCC 10987 / NRS 248).